The following is a 167-amino-acid chain: NAD(P)H-quinone oxidoreductase subunit I, chloroplastic (167 aa).

4Fe-4S ferredoxin-type domains follow at residues 55 to 84 (GRIHFEFDKCIACEVCVRVCPIDLPVVDWK) and 95 to 124 (LNYSIDFGICIFCGNCVEYCPTNCLSMTEE). [4Fe-4S] cluster contacts are provided by Cys64, Cys67, Cys70, Cys74, Cys104, Cys107, Cys110, and Cys114.

Belongs to the complex I 23 kDa subunit family. In terms of assembly, NDH is composed of at least 16 different subunits, 5 of which are encoded in the nucleus. Requires [4Fe-4S] cluster as cofactor.

Its subcellular location is the plastid. It is found in the chloroplast thylakoid membrane. It carries out the reaction a plastoquinone + NADH + (n+1) H(+)(in) = a plastoquinol + NAD(+) + n H(+)(out). The enzyme catalyses a plastoquinone + NADPH + (n+1) H(+)(in) = a plastoquinol + NADP(+) + n H(+)(out). Functionally, NDH shuttles electrons from NAD(P)H:plastoquinone, via FMN and iron-sulfur (Fe-S) centers, to quinones in the photosynthetic chain and possibly in a chloroplast respiratory chain. The immediate electron acceptor for the enzyme in this species is believed to be plastoquinone. Couples the redox reaction to proton translocation, and thus conserves the redox energy in a proton gradient. The polypeptide is NAD(P)H-quinone oxidoreductase subunit I, chloroplastic (Morus indica (Mulberry)).